The primary structure comprises 628 residues: DNA-directed RNA polymerase subunit beta' (628 aa).

Positions 70, 72, 85, and 88 each coordinate Zn(2+). Mg(2+)-binding residues include aspartate 472, aspartate 474, and aspartate 476.

The protein belongs to the RNA polymerase beta' chain family. RpoC1 subfamily. In terms of assembly, in plastids the minimal PEP RNA polymerase catalytic core is composed of four subunits: alpha, beta, beta', and beta''. When a (nuclear-encoded) sigma factor is associated with the core the holoenzyme is formed, which can initiate transcription. The cofactor is Mg(2+). It depends on Zn(2+) as a cofactor.

The protein localises to the plastid. Its subcellular location is the chloroplast. The enzyme catalyses RNA(n) + a ribonucleoside 5'-triphosphate = RNA(n+1) + diphosphate. DNA-dependent RNA polymerase catalyzes the transcription of DNA into RNA using the four ribonucleoside triphosphates as substrates. This is DNA-directed RNA polymerase subunit beta' from Gracilaria tenuistipitata var. liui (Red alga).